Consider the following 119-residue polypeptide: Fluoride-specific ion channel FluC 2 (119 aa).

A run of 4 helical transmembrane segments spans residues 1 to 21 (MITV…RYGI), 33 to 53 (FPYA…FIFS), 56 to 76 (FSPF…TTFS), and 93 to 113 (VFTL…FLGY). Na(+) is bound by residues Gly-70 and Thr-73.

Belongs to the fluoride channel Fluc/FEX (TC 1.A.43) family.

The protein resides in the cell membrane. It catalyses the reaction fluoride(in) = fluoride(out). With respect to regulation, na(+) is not transported, but it plays an essential structural role and its presence is essential for fluoride channel function. Its function is as follows. Fluoride-specific ion channel. Important for reducing fluoride concentration in the cell, thus reducing its toxicity. The polypeptide is Fluoride-specific ion channel FluC 2 (Lactobacillus johnsonii (strain CNCM I-12250 / La1 / NCC 533)).